A 218-amino-acid chain; its full sequence is Adenylate kinase (218 aa).

10-15 (GAGKGT) serves as a coordination point for ATP. Positions 30–59 (STGDMLRAAVKEETPLGRKAKEVMDSGNLV) are NMP. AMP contacts are provided by residues T31, R36, 57–59 (NLV), 85–88 (GFPR), and Q92. The segment at 122-159 (GRRVHPASGRTYHLTFNPPQQQGVDDETGEPLIQRVDD) is LID. ATP is bound by residues R123 and 132–133 (TY). The AMP site is built by R156 and R167. Residue G203 coordinates ATP.

The protein belongs to the adenylate kinase family. Monomer.

It is found in the cytoplasm. The enzyme catalyses AMP + ATP = 2 ADP. It functions in the pathway purine metabolism; AMP biosynthesis via salvage pathway; AMP from ADP: step 1/1. Catalyzes the reversible transfer of the terminal phosphate group between ATP and AMP. Plays an important role in cellular energy homeostasis and in adenine nucleotide metabolism. The polypeptide is Adenylate kinase (Chlorobium phaeovibrioides (strain DSM 265 / 1930) (Prosthecochloris vibrioformis (strain DSM 265))).